The following is a 373-amino-acid chain: UDP-N-acetylglucosamine--N-acetylmuramyl-(pentapeptide) pyrophosphoryl-undecaprenol N-acetylglucosamine transferase (373 aa).

UDP-N-acetyl-alpha-D-glucosamine is bound by residues 14–16 (TAG), N128, R165, S199, and Q295.

It belongs to the glycosyltransferase 28 family. MurG subfamily.

It is found in the cell membrane. It carries out the reaction di-trans,octa-cis-undecaprenyl diphospho-N-acetyl-alpha-D-muramoyl-L-alanyl-D-glutamyl-meso-2,6-diaminopimeloyl-D-alanyl-D-alanine + UDP-N-acetyl-alpha-D-glucosamine = di-trans,octa-cis-undecaprenyl diphospho-[N-acetyl-alpha-D-glucosaminyl-(1-&gt;4)]-N-acetyl-alpha-D-muramoyl-L-alanyl-D-glutamyl-meso-2,6-diaminopimeloyl-D-alanyl-D-alanine + UDP + H(+). Its pathway is cell wall biogenesis; peptidoglycan biosynthesis. In terms of biological role, cell wall formation. Catalyzes the transfer of a GlcNAc subunit on undecaprenyl-pyrophosphoryl-MurNAc-pentapeptide (lipid intermediate I) to form undecaprenyl-pyrophosphoryl-MurNAc-(pentapeptide)GlcNAc (lipid intermediate II). The polypeptide is UDP-N-acetylglucosamine--N-acetylmuramyl-(pentapeptide) pyrophosphoryl-undecaprenol N-acetylglucosamine transferase (Mycobacterium sp. (strain JLS)).